We begin with the raw amino-acid sequence, 187 residues long: HTH-type transcriptional repressor Rv1474c (187 aa).

An HTH tetR-type domain is found at 10–70 (AARRRQILDG…ALAREDTERM (61 aa)). Positions 33 to 52 (TVRRLEQAIGMSRGAIFHHF) form a DNA-binding region, H-T-H motif.

Homodimer.

Its activity is regulated as follows. Binding to DNA is abolished in the presence of high concentration of iron. Specifically binds to tetracycline, which leads to a conformational change in the structure of the protein and inhibits the DNA binding activity. Its function is as follows. Represses the expression of the aconitase gene acn and its own expression, in an iron-responsive manner. Binds to the inverted repeat element present in the upstream region of acn (Rv1475c)-Rv1474c operon. Preferentially binds to major groove of the DNA. The protein is HTH-type transcriptional repressor Rv1474c of Mycobacterium tuberculosis (strain ATCC 25618 / H37Rv).